A 434-amino-acid polypeptide reads, in one-letter code: Enolase (434 aa).

Residues H158 and E167 each coordinate substrate. The active-site Proton donor is the E210. 3 residues coordinate Mg(2+): D245, E294, and D319. Residues E294 and D319 each contribute to the substrate site. Residue K344 is the Proton acceptor of the active site. Residues 371 to 374 and K395 each bind substrate; that span reads SHRS.

The protein belongs to the enolase family. As to quaternary structure, homodimer. It depends on Mg(2+) as a cofactor.

It localises to the cytoplasm. It carries out the reaction (2R)-2-phosphoglycerate = phosphoenolpyruvate + H2O. The protein operates within carbohydrate degradation; glycolysis; pyruvate from D-glyceraldehyde 3-phosphate: step 4/5. This Doryteuthis pealeii (Longfin inshore squid) protein is Enolase.